We begin with the raw amino-acid sequence, 183 residues long: UPF0316 protein GTNG_0803 (183 aa).

3 helical membrane-spanning segments follow: residues 5–25 (IVLVLALQLVYVPILTLRTIF), 33–53 (LAAFMGFLEALIYVFGLSIVF), and 59–79 (YIVMIVYAAGFGARGFLLEDI).

Belongs to the UPF0316 family.

The protein resides in the cell membrane. The polypeptide is UPF0316 protein GTNG_0803 (Geobacillus thermodenitrificans (strain NG80-2)).